We begin with the raw amino-acid sequence, 36 residues long: Cecropin-D (36 aa).

Lys36 is subject to Lysine amide.

It belongs to the cecropin family.

Its subcellular location is the secreted. In terms of biological role, cecropins have lytic and antibacterial activity against several Gram-positive and Gram-negative bacteria. The chain is Cecropin-D from Antheraea pernyi (Chinese oak silk moth).